The following is a 318-amino-acid chain: Olfactory receptor 10H1 (318 aa).

At 1 to 25 (MQRANHSTVTQFILVGFSVFPHLQL) the chain is on the extracellular side. Residue N5 is glycosylated (N-linked (GlcNAc...) asparagine). The helical transmembrane segment at 26–46 (MLFLLFLLMYLFTLLGNLLIM) threads the bilayer. At 47-54 (ATVWSERS) the chain is on the cytoplasmic side. The chain crosses the membrane as a helical span at residues 55–75 (LHTPMYLFLCALSVSEILYTV). Over 76–99 (AIIPRMLADLLSTQRSIAFLACAS) the chain is Extracellular. An intrachain disulfide couples C97 to C189. The helical transmembrane segment at 100-120 (QMFFSFSFGFTHSFLLTVMGY) threads the bilayer. Over 121-139 (DRYVAICHPLRYNVLMSPR) the chain is Cytoplasmic. Residues 140–160 (GCACLVGCSWAGGLVMGMVVT) traverse the membrane as a helical segment. Residues 161-197 (SAIFHLAFCGHKEIHHFACHVPPLLKLACGDDVLVVA) are Extracellular-facing. Residues 198-218 (KGVGLVCITALLGCFLLILLS) traverse the membrane as a helical segment. Topologically, residues 219-238 (YAFIVAAILKIPSAEGRNKA) are cytoplasmic. The chain crosses the membrane as a helical span at residues 239 to 259 (FSTCASHLTVVVVHYGFASVI). At 260-272 (YLKPKSPQSLEGD) the chain is on the extracellular side. The chain crosses the membrane as a helical span at residues 273 to 293 (TLMGITYTVLTPFLSPIIFSL). Residues 294–318 (RNKELKVAMKKTFFSKLYPEKNVMM) are Cytoplasmic-facing.

Belongs to the G-protein coupled receptor 1 family.

The protein resides in the cell membrane. In terms of biological role, odorant receptor. The sequence is that of Olfactory receptor 10H1 (OR10H1) from Homo sapiens (Human).